Reading from the N-terminus, the 339-residue chain is Ribosomal RNA large subunit methyltransferase M (339 aa).

Residues Ser-176, 206–209 (APGG), Asp-225, Asp-245, and Asp-261 each bind S-adenosyl-L-methionine. Residue Lys-290 is the Proton acceptor of the active site.

The protein belongs to the class I-like SAM-binding methyltransferase superfamily. RNA methyltransferase RlmE family. RlmM subfamily. Monomer.

Its subcellular location is the cytoplasm. It carries out the reaction cytidine(2498) in 23S rRNA + S-adenosyl-L-methionine = 2'-O-methylcytidine(2498) in 23S rRNA + S-adenosyl-L-homocysteine + H(+). In terms of biological role, catalyzes the 2'-O-methylation at nucleotide C2498 in 23S rRNA. The sequence is that of Ribosomal RNA large subunit methyltransferase M from Halorhodospira halophila (strain DSM 244 / SL1) (Ectothiorhodospira halophila (strain DSM 244 / SL1)).